Here is a 352-residue protein sequence, read N- to C-terminus: Enhancer of mRNA-decapping protein 1 (352 aa).

2 disordered regions span residues 1–258 and 277–352; these read MMAH…PRNH and QYPQ…SSKS. Residues 71 to 80 show a composition bias toward low complexity; that stretch reads HTSSNTSNNK. Composition is skewed to polar residues over residues 93 to 104 and 205 to 225; these read NFGNESSHQNGG and TEPN…SVNV. The segment covering 289-309 has biased composition (low complexity); it reads GGVYPMVAPQYQQQPQQHPQQ.

Belongs to the EDC family.

Its subcellular location is the cytoplasm. Functionally, mRNA-binding protein which stimulates mRNA decapping. The protein is Enhancer of mRNA-decapping protein 1 (EDC1) of Debaryomyces hansenii (strain ATCC 36239 / CBS 767 / BCRC 21394 / JCM 1990 / NBRC 0083 / IGC 2968) (Yeast).